Here is a 495-residue protein sequence, read N- to C-terminus: ATP-dependent RNA helicase dbp3 (495 aa).

Positions 1–14 (MAKRELQDKGSTEH) are enriched in basic and acidic residues. The interval 1 to 49 (MAKRELQDKGSTEHRAKKKSRNEKHTKKAEDSQASAQSSETQYTDPKEP) is disordered. A compositionally biased stretch (basic residues) spans 15-27 (RAKKKSRNEKHTK). Positions 97–105 (SFTSPTAIQ) match the Q motif motif. The Helicase ATP-binding domain occupies 109 to 284 (WPFLFSGRDV…ATFMTSPVTV (176 aa)). 122–129 (AETGSGKT) provides a ligand contact to ATP. The short motif at 231–234 (DEAD) is the DEAD box element. Residues 315–464 (RLVQLLNKYQ…DVPEDLLKFG (150 aa)) form the Helicase C-terminal domain.

This sequence belongs to the DEAD box helicase family. DDX5/DBP2 subfamily.

It localises to the nucleus. The protein localises to the nucleolus. The catalysed reaction is ATP + H2O = ADP + phosphate + H(+). Functionally, ATP-dependent RNA helicase required for 60S ribosomal subunit synthesis. Involved in efficient pre-rRNA processing, predominantly at site A3, which is necessary for the normal formation of 25S and 5.8S rRNAs. The protein is ATP-dependent RNA helicase dbp3 (dbp3) of Aspergillus niger (strain ATCC MYA-4892 / CBS 513.88 / FGSC A1513).